The sequence spans 393 residues: DNA-directed RNA polymerase subunit Rpo1C (393 aa).

It belongs to the RNA polymerase beta' chain family. As to quaternary structure, part of the 13-subunit RNA polymerase complex. Interacts with TFS4.

The protein localises to the cytoplasm. It carries out the reaction RNA(n) + a ribonucleoside 5'-triphosphate = RNA(n+1) + diphosphate. DNA-dependent RNA polymerase (RNAP) catalyzes the transcription of DNA into RNA using the four ribonucleoside triphosphates as substrates. Forms part of the jaw domain. Its function is as follows. Reconstitution experiments show this subunit is required for basic activity. The chain is DNA-directed RNA polymerase subunit Rpo1C from Sulfolobus acidocaldarius (strain ATCC 33909 / DSM 639 / JCM 8929 / NBRC 15157 / NCIMB 11770).